The sequence spans 197 residues: Recombination protein RecR (197 aa).

The C4-type zinc-finger motif lies at 56–71 (CQRCHSFSDEAVCPLC). The region spanning 79 to 174 (TLLCVVETAA…KVTRLAQGVP (96 aa)) is the Toprim domain.

This sequence belongs to the RecR family.

In terms of biological role, may play a role in DNA repair. It seems to be involved in an RecBC-independent recombinational process of DNA repair. It may act with RecF and RecO. The polypeptide is Recombination protein RecR (Psychrobacter cryohalolentis (strain ATCC BAA-1226 / DSM 17306 / VKM B-2378 / K5)).